Consider the following 124-residue polypeptide: Large ribosomal subunit protein eL31 (124 aa).

The protein belongs to the eukaryotic ribosomal protein eL31 family. In terms of assembly, component of the large ribosomal subunit.

It is found in the cytoplasm. Functionally, component of the large ribosomal subunit. The ribosome is a large ribonucleoprotein complex responsible for the synthesis of proteins in the cell. The chain is Large ribosomal subunit protein eL31 (rpl31) from Paralichthys olivaceus (Bastard halibut).